Here is a 369-residue protein sequence, read N- to C-terminus: ATP-dependent (S)-NAD(P)H-hydrate dehydratase (369 aa).

A YjeF C-terminal domain is found at 14-356 (LFQKARKLVP…DEVHESFLTL (343 aa)). (6S)-NADPHX contacts are provided by residues G126 and 179 to 185 (NVNEFSR). ATP contacts are provided by residues 231–235 (KGPHD) and 250–259 (GGLKRSGGQG). D260 provides a ligand contact to (6S)-NADPHX. The segment covering 284–306 (GEQEHSKEAENKEEVQGELESNK) has biased composition (basic and acidic residues). Residues 284-307 (GEQEHSKEAENKEEVQGELESNKR) form a disordered region.

Belongs to the NnrD/CARKD family. Mg(2+) serves as cofactor.

It localises to the cytoplasm. The enzyme catalyses (6S)-NADHX + ATP = ADP + phosphate + NADH + H(+). The catalysed reaction is (6S)-NADPHX + ATP = ADP + phosphate + NADPH + H(+). Its function is as follows. Catalyzes the dehydration of the S-form of NAD(P)HX at the expense of ATP, which is converted to ADP. Together with NAD(P)HX epimerase, which catalyzes the epimerization of the S- and R-forms, the enzyme allows the repair of both epimers of NAD(P)HX, a damaged form of NAD(P)H that is a result of enzymatic or heat-dependent hydration. The protein is ATP-dependent (S)-NAD(P)H-hydrate dehydratase of Emericella nidulans (strain FGSC A4 / ATCC 38163 / CBS 112.46 / NRRL 194 / M139) (Aspergillus nidulans).